We begin with the raw amino-acid sequence, 215 residues long: Na(+)-translocating NADH-quinone reductase subunit D (215 aa).

The next 6 membrane-spanning stretches (helical) occupy residues 14 to 34, 42 to 62, 72 to 92, 103 to 123, 131 to 151, and 178 to 198; these read PFIS…ALAV, FVMA…ISLI, IIVQ…LLKA, VFVG…AYAM, FLDG…VGTI, and NGML…IWVL.

This sequence belongs to the NqrDE/RnfAE family. Composed of six subunits; NqrA, NqrB, NqrC, NqrD, NqrE and NqrF.

Its subcellular location is the cell inner membrane. The catalysed reaction is a ubiquinone + n Na(+)(in) + NADH + H(+) = a ubiquinol + n Na(+)(out) + NAD(+). In terms of biological role, NQR complex catalyzes the reduction of ubiquinone-1 to ubiquinol by two successive reactions, coupled with the transport of Na(+) ions from the cytoplasm to the periplasm. NqrA to NqrE are probably involved in the second step, the conversion of ubisemiquinone to ubiquinol. This chain is Na(+)-translocating NADH-quinone reductase subunit D, found in Tolumonas auensis (strain DSM 9187 / NBRC 110442 / TA 4).